A 352-amino-acid chain; its full sequence is S-adenosylmethionine:tRNA ribosyltransferase-isomerase (352 aa).

Belongs to the QueA family. As to quaternary structure, monomer.

The protein resides in the cytoplasm. The catalysed reaction is 7-aminomethyl-7-carbaguanosine(34) in tRNA + S-adenosyl-L-methionine = epoxyqueuosine(34) in tRNA + adenine + L-methionine + 2 H(+). It participates in tRNA modification; tRNA-queuosine biosynthesis. In terms of biological role, transfers and isomerizes the ribose moiety from AdoMet to the 7-aminomethyl group of 7-deazaguanine (preQ1-tRNA) to give epoxyqueuosine (oQ-tRNA). The polypeptide is S-adenosylmethionine:tRNA ribosyltransferase-isomerase (Paraburkholderia phytofirmans (strain DSM 17436 / LMG 22146 / PsJN) (Burkholderia phytofirmans)).